The primary structure comprises 385 residues: Glutamate 5-kinase (385 aa).

Lys-17 is a binding site for ATP. Substrate-binding residues include Ser-64, Asp-151, and Asn-165. 185-186 contacts ATP; that stretch reads SD. Residues 291–367 form the PUA domain; that stretch reads SGTVRVDAGA…DQIENVLGYS (77 aa).

The protein belongs to the glutamate 5-kinase family.

It localises to the cytoplasm. It catalyses the reaction L-glutamate + ATP = L-glutamyl 5-phosphate + ADP. It functions in the pathway amino-acid biosynthesis; L-proline biosynthesis; L-glutamate 5-semialdehyde from L-glutamate: step 1/2. Functionally, catalyzes the transfer of a phosphate group to glutamate to form L-glutamate 5-phosphate. The chain is Glutamate 5-kinase from Methanosarcina mazei (strain ATCC BAA-159 / DSM 3647 / Goe1 / Go1 / JCM 11833 / OCM 88) (Methanosarcina frisia).